A 731-amino-acid chain; its full sequence is Elongation factor 2 (731 aa).

Positions 19 to 260 (KHIRNIGIVA…MVVHHLPNPL (242 aa)) constitute a tr-type G domain. Residues 28–35 (AHIDHGKT), 94–98 (DTPGH), and 148–151 (NKVD) each bind GTP. At His597 the chain carries Diphthamide.

This sequence belongs to the TRAFAC class translation factor GTPase superfamily. Classic translation factor GTPase family. EF-G/EF-2 subfamily.

The protein resides in the cytoplasm. Functionally, catalyzes the GTP-dependent ribosomal translocation step during translation elongation. During this step, the ribosome changes from the pre-translocational (PRE) to the post-translocational (POST) state as the newly formed A-site-bound peptidyl-tRNA and P-site-bound deacylated tRNA move to the P and E sites, respectively. Catalyzes the coordinated movement of the two tRNA molecules, the mRNA and conformational changes in the ribosome. This chain is Elongation factor 2, found in Methanoregula boonei (strain DSM 21154 / JCM 14090 / 6A8).